The chain runs to 429 residues: Histidine--tRNA ligase (429 aa).

The protein belongs to the class-II aminoacyl-tRNA synthetase family. Homodimer.

It localises to the cytoplasm. The catalysed reaction is tRNA(His) + L-histidine + ATP = L-histidyl-tRNA(His) + AMP + diphosphate + H(+). This Rippkaea orientalis (strain PCC 8801 / RF-1) (Cyanothece sp. (strain PCC 8801)) protein is Histidine--tRNA ligase.